A 296-amino-acid polypeptide reads, in one-letter code: Nitrogenase iron protein (296 aa).

ATP is bound at residue 10 to 17 (GKGGIGKS). C98 provides a ligand contact to [4Fe-4S] cluster. ADP-ribosylarginine; by dinitrogenase reductase ADP-ribosyltransferase is present on R101. C133 is a binding site for [4Fe-4S] cluster.

It belongs to the NifH/BchL/ChlL family. In terms of assembly, homodimer. It depends on [4Fe-4S] cluster as a cofactor. Post-translationally, the reversible ADP-ribosylation of Arg-101 inactivates the nitrogenase reductase and regulates nitrogenase activity.

It catalyses the reaction N2 + 8 reduced [2Fe-2S]-[ferredoxin] + 16 ATP + 16 H2O = H2 + 8 oxidized [2Fe-2S]-[ferredoxin] + 2 NH4(+) + 16 ADP + 16 phosphate + 6 H(+). Its function is as follows. The key enzymatic reactions in nitrogen fixation are catalyzed by the nitrogenase complex, which has 2 components: the iron protein and the molybdenum-iron protein. The chain is Nitrogenase iron protein from Magnetococcus marinus (strain ATCC BAA-1437 / JCM 17883 / MC-1).